A 451-amino-acid chain; its full sequence is Serine--tRNA ligase, cytoplasmic (451 aa).

236–238 (TSE) contributes to the L-serine binding site. Residues 267 to 269 (RKE) and Val283 each bind ATP. Glu290 contributes to the L-serine binding site. Residue 354 to 357 (ELVS) participates in ATP binding. Thr392 serves as a coordination point for L-serine.

Belongs to the class-II aminoacyl-tRNA synthetase family. Type-1 seryl-tRNA synthetase subfamily. As to quaternary structure, homodimer. The tRNA molecule binds across the dimer.

It is found in the cytoplasm. It catalyses the reaction tRNA(Ser) + L-serine + ATP = L-seryl-tRNA(Ser) + AMP + diphosphate + H(+). The catalysed reaction is tRNA(Sec) + L-serine + ATP = L-seryl-tRNA(Sec) + AMP + diphosphate + H(+). It participates in aminoacyl-tRNA biosynthesis; selenocysteinyl-tRNA(Sec) biosynthesis; L-seryl-tRNA(Sec) from L-serine and tRNA(Sec): step 1/1. Its function is as follows. Catalyzes the attachment of serine to tRNA(Ser). Is also able to aminoacylate tRNA(Sec) with serine, to form the misacylated tRNA L-seryl-tRNA(Sec), which will be further converted into selenocysteinyl-tRNA(Sec). The protein is Serine--tRNA ligase, cytoplasmic (serS) of Dictyostelium discoideum (Social amoeba).